The sequence spans 212 residues: Thymidylate kinase (212 aa).

Residue Gly10–Thr17 coordinates ATP.

It belongs to the thymidylate kinase family.

It carries out the reaction dTMP + ATP = dTDP + ADP. Its function is as follows. Phosphorylation of dTMP to form dTDP in both de novo and salvage pathways of dTTP synthesis. This is Thymidylate kinase from Prochlorococcus marinus (strain MIT 9301).